The sequence spans 501 residues: Alpha-internexin (501 aa).

The head stretch occupies residues 1-87 (MSFGSEHYLC…SQAAARTNEY (87 aa)). The residue at position 72 (Ser-72) is a Phosphoserine. The tract at residues 88–129 (KIIRTNEKEQLQGLNDRFAVFIEKVHQLETQNRALEAELAAL) is coil 1A. The region spanning 94 to 407 (EKEQLQGLND…KLLEGEETRF (314 aa)) is the IF rod domain. Residues 130-142 (RQRHAEPSRVGEL) form a linker 1 region. Residues 143–238 (FQRELRELRA…QVHDEEVAEL (96 aa)) form a coil 1B region. Residue Ser-219 is modified to Phosphoserine. Positions 239-262 (LATLQASSQAAAEVDVAVAKPDLT) are linker 2. The segment at 263–408 (SALREIRAQY…LLEGEETRFS (146 aa)) is coil 2. Lys-290 bears the N6-acetyllysine mark. 2 positions are modified to phosphoserine: Ser-335 and Ser-498. The interval 409–501 (TGGLSISGLN…EESTSSSQKM (93 aa)) is tail. The segment at 441-501 (SAGLSLKKEE…EESTSSSQKM (61 aa)) is disordered. The segment covering 488–501 (KSATEESTSSSQKM) has biased composition (polar residues).

The protein belongs to the intermediate filament family. As to quaternary structure, forms homodimers (in vitro). Forms heterodimers with NEFL, NEFM or NEFH (in vitro). Post-translationally, O-glycosylated.

Class-IV neuronal intermediate filament that is able to self-assemble. It is involved in the morphogenesis of neurons. It may form an independent structural network without the involvement of other neurofilaments or it may cooperate with NEFL to form the filamentous backbone to which NEFM and NEFH attach to form the cross-bridges. May also cooperate with the neuronal intermediate filament protein PRPH to form filamentous networks. This Mus musculus (Mouse) protein is Alpha-internexin (Ina).